A 187-amino-acid chain; its full sequence is Cytochrome b-245 chaperone 1 (187 aa).

The helical transmembrane segment at 20–42 (GIRSWSLLVGILSTGLAAAYYSG) threads the bilayer. The interval 167–187 (ESPSERSQSSDSEPDGPGGQS) is disordered. 2 positions are modified to phosphoserine: Ser168 and Ser170.

This sequence belongs to the CYBC1 family. In terms of assembly, interacts with CYBB; CYBC1 may act as a chaperone stabilizing Cytochrome b-245 heterodimer.

The protein resides in the endoplasmic reticulum membrane. In terms of biological role, functions as a chaperone necessary for a stable expression of the CYBA and CYBB subunits of the cytochrome b-245 heterodimer. Controls the phagocyte respiratory burst and is essential for innate immunity. The sequence is that of Cytochrome b-245 chaperone 1 from Rattus norvegicus (Rat).